Reading from the N-terminus, the 83-residue chain is Small ribosomal subunit protein bS16 (83 aa).

The protein belongs to the bacterial ribosomal protein bS16 family.

The chain is Small ribosomal subunit protein bS16 from Pseudomonas entomophila (strain L48).